The primary structure comprises 462 residues: tRNA modification GTPase MnmE (462 aa).

Positions 23, 88, and 127 each coordinate (6S)-5-formyl-5,6,7,8-tetrahydrofolate. Residues 224–383 form the TrmE-type G domain; that stretch reads GLATVIIGRP…LEKAIADLFF (160 aa). K(+) is bound at residue asparagine 234. Residues 234–239, 253–259, and 278–281 contribute to the GTP site; these read NVGKSS, TDIPGTT, and DTAG. Position 238 (serine 238) interacts with Mg(2+). Positions 253, 255, and 258 each coordinate K(+). Position 259 (threonine 259) interacts with Mg(2+). Lysine 462 serves as a coordination point for (6S)-5-formyl-5,6,7,8-tetrahydrofolate.

This sequence belongs to the TRAFAC class TrmE-Era-EngA-EngB-Septin-like GTPase superfamily. TrmE GTPase family. Homodimer. Heterotetramer of two MnmE and two MnmG subunits. The cofactor is K(+).

The protein localises to the cytoplasm. Functionally, exhibits a very high intrinsic GTPase hydrolysis rate. Involved in the addition of a carboxymethylaminomethyl (cmnm) group at the wobble position (U34) of certain tRNAs, forming tRNA-cmnm(5)s(2)U34. This chain is tRNA modification GTPase MnmE, found in Geobacillus kaustophilus (strain HTA426).